The primary structure comprises 259 residues: UPF0246 protein ABBFA_001173 (259 aa).

It belongs to the UPF0246 family.

In Acinetobacter baumannii (strain AB307-0294), this protein is UPF0246 protein ABBFA_001173.